A 265-amino-acid chain; its full sequence is Hydroxyethylthiazole kinase 1 (265 aa).

Met39 provides a ligand contact to substrate. The ATP site is built by Lys115 and Thr168. Residue Gly195 coordinates substrate.

This sequence belongs to the Thz kinase family. The cofactor is Mg(2+).

It carries out the reaction 5-(2-hydroxyethyl)-4-methylthiazole + ATP = 4-methyl-5-(2-phosphooxyethyl)-thiazole + ADP + H(+). It functions in the pathway cofactor biosynthesis; thiamine diphosphate biosynthesis; 4-methyl-5-(2-phosphoethyl)-thiazole from 5-(2-hydroxyethyl)-4-methylthiazole: step 1/1. Functionally, catalyzes the phosphorylation of the hydroxyl group of 4-methyl-5-beta-hydroxyethylthiazole (THZ). The sequence is that of Hydroxyethylthiazole kinase 1 from Clostridium botulinum (strain Loch Maree / Type A3).